We begin with the raw amino-acid sequence, 479 residues long: NADH-quinone oxidoreductase subunit N (479 aa).

A run of 14 helical transmembrane segments spans residues 3-23 (MLYG…FQLI), 40-60 (IGFA…FNGI), 77-97 (IIIL…IKVA), 102-122 (HSEY…LVSA), 125-145 (FMVM…LTTF), 159-179 (YFIL…LVYG), 200-220 (MAVL…KLSI), 234-254 (APLV…LALL), 268-288 (FFYI…VGAF), 299-319 (FIAY…VANS), 327-347 (ISYF…AIII), 373-393 (SILI…AGFI), 409-429 (ELII…LNIV), and 452-472 (LVSI…MLFG).

Belongs to the complex I subunit 2 family. As to quaternary structure, NDH-1 is composed of 14 different subunits. Subunits NuoA, H, J, K, L, M, N constitute the membrane sector of the complex.

The protein resides in the cell inner membrane. It catalyses the reaction a quinone + NADH + 5 H(+)(in) = a quinol + NAD(+) + 4 H(+)(out). In terms of biological role, NDH-1 shuttles electrons from NADH, via FMN and iron-sulfur (Fe-S) centers, to quinones in the respiratory chain. The immediate electron acceptor for the enzyme in this species is believed to be ubiquinone. Couples the redox reaction to proton translocation (for every two electrons transferred, four hydrogen ions are translocated across the cytoplasmic membrane), and thus conserves the redox energy in a proton gradient. The protein is NADH-quinone oxidoreductase subunit N of Orientia tsutsugamushi (strain Ikeda) (Rickettsia tsutsugamushi).